The primary structure comprises 808 residues: ATP-dependent RNA helicase dbp4 (808 aa).

The interval 1-20 is disordered; it reads MAPPSVGRKSKNISKGKVDA. The short motif at 49–77 is the Q motif element; sequence KNFSELPLSGPTSSGLEASHFKTLTDVQS. Residues 80–254 form the Helicase ATP-binding domain; the sequence is VPLALKGKDI…RLSLKEPEYV (175 aa). 93–100 contributes to the ATP binding site; sequence AKTGSGKT. Residues 202–205 carry the DEAD box motif; that stretch reads DEAD. Positions 280–439 constitute a Helicase C-terminal domain; that stretch reads KLNTLFGFIR…DIKNQLQNMC (160 aa). 3 disordered regions span residues 491–535, 555–620, and 654–795; these read IKFQ…KYDR, DDTP…GISK, and EEGN…EPET. A compositionally biased stretch (basic and acidic residues) spans 519–535; sequence TEKKPKKKDEVRTKYDR. 2 stretches are compositionally biased toward acidic residues: residues 564 to 573 and 584 to 605; these read GTADADEDND and DNDD…DDDV. Residues 670 to 705 show a composition bias toward basic and acidic residues; it reads FRAKGTAEEQRAKFLEEEAERVREADLLDKQTAKDK. Over residues 720–739 the composition is skewed to acidic residues; sequence LDDDDEEALELVDAGDDEDP. Residues 767-778 show a composition bias toward basic and acidic residues; sequence KWFEDDSDDERK.

The protein belongs to the DEAD box helicase family. DDX10/DBP4 subfamily. In terms of assembly, interacts with the U3 and U14 snoRNAs. Associates with pre-ribosomal complexes.

It localises to the nucleus. The protein localises to the nucleolus. The enzyme catalyses ATP + H2O = ADP + phosphate + H(+). Its function is as follows. ATP-dependent RNA helicase required for ribosome biogenesis. Involved in the release of U14 snoRNA in pre-ribosomal complexes. Required for pre-rRNA cleavage at site A2. This chain is ATP-dependent RNA helicase dbp4 (dbp4), found in Sclerotinia sclerotiorum (strain ATCC 18683 / 1980 / Ss-1) (White mold).